The chain runs to 227 residues: MGRGKIAIKRIDNTMNRQVTFSKRRGGLMKKARELAILCDADVGLIVFSCTGRLYDFSSSSMKSIIERYQEAGEEHCRLLNPMSEAKFWQREVTTLRQQVQNLHHNNRQLLGEEISNFTVRDLQLLQNQVEMSLHSIRNKKDQLLAEEILKLNEKGSLVQKENSELRKKFNIAHQRNIELHKKLNSGESTSSEQVTRSSKDPGESSTPRDSRVCIDLELSQKEVEDE.

One can recognise an MADS-box domain in the interval 1-61 (MGRGKIAIKR…GRLYDFSSSS (61 aa)). In terms of domain architecture, K-box spans 86-176 (AKFWQREVTT…RKKFNIAHQR (91 aa)). Residues 183 to 227 (KLNSGESTSSEQVTRSSKDPGESSTPRDSRVCIDLELSQKEVEDE) form a disordered region. Polar residues predominate over residues 186–197 (SGESTSSEQVTR). Residues 198 to 227 (SSKDPGESSTPRDSRVCIDLELSQKEVEDE) show a composition bias toward basic and acidic residues.

As to expression, expressed in seedling roots.

It localises to the nucleus. In terms of biological role, probable transcription factor. This chain is MADS-box transcription factor 25 (MADS25), found in Oryza sativa subsp. japonica (Rice).